The sequence spans 226 residues: Clarin-3 (226 aa).

Residues 8-28 (LMFLSSFFTSLGSFIVICSIL) traverse the membrane as a helical segment. N-linked (GlcNAc...) asparagine glycosylation is present at N83. A run of 3 helical transmembrane segments spans residues 92–112 (VTIL…GFTF), 129–149 (VYTW…LFVA), and 181–201 (FWLI…IIFY).

The protein belongs to the clarin family.

It is found in the membrane. In Homo sapiens (Human), this protein is Clarin-3 (CLRN3).